A 693-amino-acid chain; its full sequence is Elongation factor G (693 aa).

Residues 6 to 286 (KYTRNIGIAA…AICRYLPSPI (281 aa)) form the tr-type G domain. GTP is bound by residues 15–22 (AHIDAGKT), 83–87 (DTPGH), and 137–140 (NKMD).

The protein belongs to the TRAFAC class translation factor GTPase superfamily. Classic translation factor GTPase family. EF-G/EF-2 subfamily.

The protein resides in the cytoplasm. In terms of biological role, catalyzes the GTP-dependent ribosomal translocation step during translation elongation. During this step, the ribosome changes from the pre-translocational (PRE) to the post-translocational (POST) state as the newly formed A-site-bound peptidyl-tRNA and P-site-bound deacylated tRNA move to the P and E sites, respectively. Catalyzes the coordinated movement of the two tRNA molecules, the mRNA and conformational changes in the ribosome. This chain is Elongation factor G, found in Karelsulcia muelleri (strain GWSS) (Sulcia muelleri).